The primary structure comprises 301 residues: Outer membrane porin G (301 aa).

The N-terminal stretch at 1 to 21 is a signal peptide; sequence MKKLLPCTALVMCAGMACAQA. 16 beta stranded membrane passes run 27–35, 47–57, 64–72, 89–98, 104–112, 129–136, 149–158, 172–182, 186–195, 201–209, 213–222, 230–238, 240–248, 254–265, 269–279, and 289–300; these read WHFNIGAMY, MDGLAEPSVYF, WRIALAYYQ, RPELEVHYQF, FSFGLTGGF, NMQRWKIA, FNGWLSMYKF, VETETGLQYTF, VALRVNYYLE, DDSRNNGEF, EIRAYLPLTL, YTRIGLDRW, NWDWQDDIE, FNRVGLFYGYDF, LSVSLEYAFEW, and KFHYAGVGVNYS.

In terms of assembly, monomer.

It is found in the cell outer membrane. In terms of biological role, forms channels functionally larger than those of classical porins. Functionally, may act as a regulator of the RCS-phosphorelay signal transduction pathway. In Escherichia coli (strain K12), this protein is Outer membrane porin G (ompG).